An 817-amino-acid polypeptide reads, in one-letter code: Exocyst complex component 6 (817 aa).

2 coiled-coil regions span residues 87 to 149 (QSFV…DQIA) and 247 to 270 (TDAERAKKIQEEARKNASNVEIEV).

It belongs to the SEC15 family. In terms of assembly, the exocyst complex is composed of sec-3/exoc1, sec-5/exoc2, sec-6/exoc3, sec-8/exoc4, sec-10/exoc5, sec-15/exoc6, exo-70/exoc7 and exo-84/exoc8.

Its function is as follows. Component of the exocyst complex involved in the docking of exocytic vesicles with fusion sites on the plasma membrane. In Caenorhabditis elegans, this protein is Exocyst complex component 6 (sec-15).